Reading from the N-terminus, the 911-residue chain is Valine--tRNA ligase (911 aa).

The 'HIGH' region signature appears at 57–67; that stretch reads PTVSGSLHVGH. Positions 599-603 match the 'KMSKS' region motif; it reads KMSKS. Lysine 602 contacts ATP. The interval 882 to 911 is disordered; it reads EESAAEDAPETEVAVEASELGEPPAKKPKH.

This sequence belongs to the class-I aminoacyl-tRNA synthetase family. ValS type 2 subfamily. In terms of assembly, monomer.

It is found in the cytoplasm. It catalyses the reaction tRNA(Val) + L-valine + ATP = L-valyl-tRNA(Val) + AMP + diphosphate. Its function is as follows. Catalyzes the attachment of valine to tRNA(Val). As ValRS can inadvertently accommodate and process structurally similar amino acids such as threonine, to avoid such errors, it has a 'posttransfer' editing activity that hydrolyzes mischarged Thr-tRNA(Val) in a tRNA-dependent manner. The protein is Valine--tRNA ligase of Bifidobacterium longum (strain DJO10A).